The following is an 86-amino-acid chain: Large ribosomal subunit protein bL27 (86 aa).

The span at 1-11 (MATKKAGGGSR) shows a compositional bias: gly residues. Residues 1 to 24 (MATKKAGGGSRNGRDSAGRRLGVK) form a disordered region.

This sequence belongs to the bacterial ribosomal protein bL27 family.

The chain is Large ribosomal subunit protein bL27 from Rickettsia africae (strain ESF-5).